A 99-amino-acid chain; its full sequence is MDKVMRMSSEKGVVIFTKSSCCLSYAVQVLFQDLGVNPKIHEIDKDPECREIEKALMRLGCSKPVPAVFIGGKLVGSTNEVMSMHLSSSLVPLVKPYLC.

The 99-residue stretch at 1 to 99 (MDKVMRMSSE…LVPLVKPYLC (99 aa)) folds into the Glutaredoxin domain. [2Fe-2S] cluster is bound at residue Cys-21.

It belongs to the glutaredoxin family. CC-type subfamily.

The protein resides in the cytoplasm. May only reduce GSH-thiol disulfides, but not protein disulfides. The chain is Monothiol glutaredoxin-S11 (GRXS11) from Arabidopsis thaliana (Mouse-ear cress).